Consider the following 382-residue polypeptide: uncharacterized protein (382 aa).

The next 12 membrane-spanning stretches (helical) occupy residues 8-28, 45-65, 75-95, 102-122, 131-151, 157-177, 204-224, 231-251, 270-290, 291-311, 325-345, and 349-369; these read VMLL…LNTL, MVSS…GYLI, YLAS…VGFW, FIAG…LMCS, LLAA…LLVS, LLHV…PLLF, LGVN…GLMP, GMAN…GILG, VQVF…AMAP, ALFI…AWAC, ALLL…AMLM, and SDNL…LMLL.

Belongs to the major facilitator superfamily. YcaD (TC 2.A.1.26) family.

The protein localises to the cell inner membrane. This is an uncharacterized protein from Salmonella paratyphi B (strain ATCC BAA-1250 / SPB7).